Consider the following 480-residue polypeptide: Ribosomal protein uS12 methylthiotransferase RimO (480 aa).

Positions 37–147 constitute an MTTase N-terminal domain; that stretch reads NRIGFVSLGC…VLKHVHKYVP (111 aa). Residues Cys46, Cys82, Cys111, Cys179, Cys183, and Cys186 each coordinate [4Fe-4S] cluster. The Radical SAM core domain occupies 165 to 402; sequence LTPKHYAYLK…MEVQAEISAE (238 aa). The region spanning 405 to 471 is the TRAM domain; sequence ARFVGRTMDI…EHDLWAELVD (67 aa).

This sequence belongs to the methylthiotransferase family. RimO subfamily. The cofactor is [4Fe-4S] cluster.

Its subcellular location is the cytoplasm. The catalysed reaction is L-aspartate(89)-[ribosomal protein uS12]-hydrogen + (sulfur carrier)-SH + AH2 + 2 S-adenosyl-L-methionine = 3-methylsulfanyl-L-aspartate(89)-[ribosomal protein uS12]-hydrogen + (sulfur carrier)-H + 5'-deoxyadenosine + L-methionine + A + S-adenosyl-L-homocysteine + 2 H(+). In terms of biological role, catalyzes the methylthiolation of an aspartic acid residue of ribosomal protein uS12. The chain is Ribosomal protein uS12 methylthiotransferase RimO from Shewanella sp. (strain ANA-3).